A 351-amino-acid polypeptide reads, in one-letter code: Alcohol dehydrogenase 5 (351 aa).

Cys47, His70, Cys101, Cys104, Cys107, Cys115, and Cys183 together coordinate Zn(2+). NAD(+)-binding positions include 181–187, Asp205, Lys210, 272–274, and Arg344; these read GACGGLG and VGM.

The protein belongs to the zinc-containing alcohol dehydrogenase family. The cofactor is Zn(2+).

It catalyses the reaction a primary alcohol + NAD(+) = an aldehyde + NADH + H(+). The catalysed reaction is a secondary alcohol + NAD(+) = a ketone + NADH + H(+). In Saccharomyces pastorianus (Lager yeast), this protein is Alcohol dehydrogenase 5 (ADH5).